Consider the following 283-residue polypeptide: Pantothenate synthetase (283 aa).

30–37 (MGNLHAGH) contributes to the ATP binding site. His-37 acts as the Proton donor in catalysis. Gln-61 serves as a coordination point for (R)-pantoate. A beta-alanine-binding site is contributed by Gln-61. 149 to 152 (GQKD) contributes to the ATP binding site. Gln-155 contacts (R)-pantoate. ATP contacts are provided by residues Val-178 and 186–189 (LSSR).

It belongs to the pantothenate synthetase family. Homodimer.

The protein resides in the cytoplasm. It carries out the reaction (R)-pantoate + beta-alanine + ATP = (R)-pantothenate + AMP + diphosphate + H(+). It functions in the pathway cofactor biosynthesis; (R)-pantothenate biosynthesis; (R)-pantothenate from (R)-pantoate and beta-alanine: step 1/1. Catalyzes the condensation of pantoate with beta-alanine in an ATP-dependent reaction via a pantoyl-adenylate intermediate. The sequence is that of Pantothenate synthetase from Hydrogenovibrio crunogenus (strain DSM 25203 / XCL-2) (Thiomicrospira crunogena).